A 503-amino-acid polypeptide reads, in one-letter code: Lithocholate 6-beta-hydroxylase (503 aa).

Residue Cys442 coordinates heme.

This sequence belongs to the cytochrome P450 family. The cofactor is heme.

It is found in the endoplasmic reticulum membrane. The protein resides in the microsome membrane. The enzyme catalyses lithocholate + reduced [NADPH--hemoprotein reductase] + O2 = 6beta-hydroxylithocholate + oxidized [NADPH--hemoprotein reductase] + H2O + H(+). Catalyzes the 6 beta-hydroxylation of lithocholic acid and steroid hormones. This is Lithocholate 6-beta-hydroxylase (CYP3A10) from Mesocricetus auratus (Golden hamster).